Here is a 125-residue protein sequence, read N- to C-terminus: MAITKEEIIEAVGSMSVMDLNDLVKAFEEKFGVSAAAMAVVGPAGAGGGDAGGAEQTEFTVNLVEAGANKVSVIKAVREITGLGLKEAKDLVDGAPKPIKEGVDKKTAEEAKKKLEEAGAKAELK.

The interval 95 to 125 is disordered; it reads APKPIKEGVDKKTAEEAKKKLEEAGAKAELK.

The protein belongs to the bacterial ribosomal protein bL12 family. Homodimer. Part of the ribosomal stalk of the 50S ribosomal subunit. Forms a multimeric L10(L12)X complex, where L10 forms an elongated spine to which 2 to 4 L12 dimers bind in a sequential fashion. Binds GTP-bound translation factors.

Forms part of the ribosomal stalk which helps the ribosome interact with GTP-bound translation factors. Is thus essential for accurate translation. This chain is Large ribosomal subunit protein bL12, found in Polynucleobacter necessarius subsp. necessarius (strain STIR1).